The chain runs to 329 residues: R-linalool synthase (329 aa).

Residue Asp-79 participates in Mg(2+) binding. Residues 79–83 (DDQFD) carry the DDXXD motif motif. A substrate-binding site is contributed by Arg-172. Mg(2+) contacts are provided by Asn-218 and Ser-222. Residues 218 to 226 (NELHSFEKD) carry the NXXXSXXXD motif motif. A substrate-binding site is contributed by Lys-225. Residue Asp-226 participates in Mg(2+) binding. 308 to 309 (RY) serves as a coordination point for substrate.

The protein belongs to the terpene synthase family. As to quaternary structure, homodimer. The cofactor is Mg(2+).

It carries out the reaction (2E)-geranyl diphosphate + H2O = (R)-linalool + diphosphate. It catalyses the reaction (2E,6E)-farnesyl diphosphate + H2O = (6E)-nerolidol + diphosphate. In vitro, catalyzes the formation of R-linalool from geranyl diphosphate (GPP). Can also accept farnesyl diphosphate (FPP) as substrate to produce trans-nerolidol. The chain is R-linalool synthase from Streptomyces clavuligerus.